Here is a 791-residue protein sequence, read N- to C-terminus: Calcium-transporting ATPase CtpE (791 aa).

The next 3 helical transmembrane spans lie at 53–73 (LFVI…LLII), 213–233 (ILQF…YTQL), and 252–272 (VPMV…VGVV). D299 (4-aspartylphosphate intermediate) is an active-site residue. Positions 299, 301, and 530 each coordinate Mg(2+). Transmembrane regions (helical) follow at residues 596–616 (VYSV…KIFG), 627–647 (IHVT…LSLA), 664–684 (AALP…LVAY), 697–717 (ASTA…AVVA), 725–745 (VLLV…PLAQ), and 757–777 (VTSV…VLWW).

The protein belongs to the cation transport ATPase (P-type) (TC 3.A.3) family.

It is found in the cell membrane. The catalysed reaction is Ca(2+)(in) + ATP + H2O = Ca(2+)(out) + ADP + phosphate + H(+). In terms of biological role, P-type ATPase involved in specific uptake of calcium. Essential for growth and maintenance of cell surface integrity under Ca(2+)-deficient conditions. This is Calcium-transporting ATPase CtpE from Mycolicibacterium smegmatis (strain ATCC 700084 / mc(2)155) (Mycobacterium smegmatis).